Consider the following 257-residue polypeptide: Zinc import ATP-binding protein ZnuC (257 aa).

The region spanning 5 to 220 (VELQSVTVTF…PSYVALFGQQ (216 aa)) is the ABC transporter domain. 37–44 (GPNGAGKS) lines the ATP pocket. Residues 234-257 (HEHDLAGSPVGPCQHNKQHGHDNA) are disordered.

The protein belongs to the ABC transporter superfamily. Zinc importer (TC 3.A.1.15.5) family. In terms of assembly, the complex is composed of two ATP-binding proteins (ZnuC), two transmembrane proteins (ZnuB) and a solute-binding protein (ZnuA).

The protein localises to the cell inner membrane. The catalysed reaction is Zn(2+)(out) + ATP(in) + H2O(in) = Zn(2+)(in) + ADP(in) + phosphate(in) + H(+)(in). Part of the ABC transporter complex ZnuABC involved in zinc import. Responsible for energy coupling to the transport system. The polypeptide is Zinc import ATP-binding protein ZnuC (Photobacterium profundum (strain SS9)).